Here is a 90-residue protein sequence, read N- to C-terminus: MNDSVKTSLKRTLVGKVVSNKMDKTVTVLVEHRVKHPIYGKYVVRSKKYHAHDDANTYNEGDLVEIQETRPISKTKAWVVARLVEAARVI.

The protein belongs to the universal ribosomal protein uS17 family. Part of the 30S ribosomal subunit.

One of the primary rRNA binding proteins, it binds specifically to the 5'-end of 16S ribosomal RNA. This Paraburkholderia phytofirmans (strain DSM 17436 / LMG 22146 / PsJN) (Burkholderia phytofirmans) protein is Small ribosomal subunit protein uS17.